The chain runs to 307 residues: Small ribosomal subunit biogenesis GTPase RsgA (307 aa).

A CP-type G domain is found at Arg85–Phe242. Residues Asn135–Asp138 and Gly184–Thr192 each bind GTP. Cys266, Cys271, His273, and Cys279 together coordinate Zn(2+).

This sequence belongs to the TRAFAC class YlqF/YawG GTPase family. RsgA subfamily. Monomer. Associates with 30S ribosomal subunit, binds 16S rRNA. The cofactor is Zn(2+).

Its subcellular location is the cytoplasm. One of several proteins that assist in the late maturation steps of the functional core of the 30S ribosomal subunit. Helps release RbfA from mature subunits. May play a role in the assembly of ribosomal proteins into the subunit. Circularly permuted GTPase that catalyzes slow GTP hydrolysis, GTPase activity is stimulated by the 30S ribosomal subunit. This is Small ribosomal subunit biogenesis GTPase RsgA from Neisseria meningitidis serogroup C (strain 053442).